The chain runs to 154 residues: D-aminoacyl-tRNA deacylase (154 aa).

Positions Gly-137–Pro-138 match the Gly-cisPro motif, important for rejection of L-amino acids motif.

It belongs to the DTD family. In terms of assembly, homodimer.

It localises to the cytoplasm. The enzyme catalyses glycyl-tRNA(Ala) + H2O = tRNA(Ala) + glycine + H(+). The catalysed reaction is a D-aminoacyl-tRNA + H2O = a tRNA + a D-alpha-amino acid + H(+). In terms of biological role, an aminoacyl-tRNA editing enzyme that deacylates mischarged D-aminoacyl-tRNAs. Also deacylates mischarged glycyl-tRNA(Ala), protecting cells against glycine mischarging by AlaRS. Acts via tRNA-based rather than protein-based catalysis; rejects L-amino acids rather than detecting D-amino acids in the active site. By recycling D-aminoacyl-tRNA to D-amino acids and free tRNA molecules, this enzyme counteracts the toxicity associated with the formation of D-aminoacyl-tRNA entities in vivo and helps enforce protein L-homochirality. In Thermomicrobium roseum (strain ATCC 27502 / DSM 5159 / P-2), this protein is D-aminoacyl-tRNA deacylase.